The primary structure comprises 1357 residues: DNA-directed RNA polymerase subunit beta (1357 aa).

This sequence belongs to the RNA polymerase beta chain family. In terms of assembly, the RNAP catalytic core consists of 2 alpha, 1 beta, 1 beta' and 1 omega subunit. When a sigma factor is associated with the core the holoenzyme is formed, which can initiate transcription.

The catalysed reaction is RNA(n) + a ribonucleoside 5'-triphosphate = RNA(n+1) + diphosphate. Functionally, DNA-dependent RNA polymerase catalyzes the transcription of DNA into RNA using the four ribonucleoside triphosphates as substrates. The chain is DNA-directed RNA polymerase subunit beta from Pseudomonas putida (strain W619).